The sequence spans 128 residues: MLQNLALSFPFITRFFQKQMLGSQNSSGKTPGFNEAEGITSNIFQIAGGISLLVILLLIIGFLSCLLGGIFLHKHKYAEVGSPAHAKTKNLFVAFFVVGSLLLLVAVVMLIAFGVLDASLPLPKENNS.

2 helical membrane passes run 52-72 and 91-111; these read LLVI…GIFL and LFVA…VMLI.

It localises to the cell membrane. This is an uncharacterized protein from Mycoplasma pneumoniae (strain ATCC 29342 / M129 / Subtype 1) (Mycoplasmoides pneumoniae).